We begin with the raw amino-acid sequence, 435 residues long: Probable xyloglucan galactosyltransferase GT19 (435 aa).

At 1–6 (MASKST) the chain is on the cytoplasmic side. Residues 7–23 (VTTLTIFFFFFFFFIEP) form a helical; Signal-anchor for type II membrane protein membrane-spanning segment. The Lumenal segment spans residues 24–435 (KVQSQQISAV…GVLDRIISRV (412 aa)). N-linked (GlcNAc...) asparagine glycosylation is found at asparagine 140, asparagine 203, and asparagine 277.

The protein belongs to the glycosyltransferase 47 family. As to expression, expressed in roots, hypocotyls, cotyledons, leaves, stems, stamens and pollen grains.

It localises to the golgi apparatus membrane. Its function is as follows. Functions in xyloglucan synthesis by adding side chains to the xylosylated glucan backbone. Involved in the galactosylation of hemicellulose xyloglucan. The polypeptide is Probable xyloglucan galactosyltransferase GT19 (Arabidopsis thaliana (Mouse-ear cress)).